We begin with the raw amino-acid sequence, 129 residues long: Cuticle protein 12.5 (129 aa).

10 tandem repeats follow at residues 7-10 (AAPA), 15-18 (AAPA), 23-26 (AAPA), 28-31 (AAPV), 37-40 (AAPA), 67-70 (AAPA), 79-82 (AAPA), 91-94 (AAPA), 103-106 (AAPA), and 117-120 (AAPA).

Its function is as follows. Component of the cuticle of migratory locust which contains more than 100 different structural proteins. The sequence is that of Cuticle protein 12.5 from Locusta migratoria (Migratory locust).